Reading from the N-terminus, the 227-residue chain is Lipoprotein-releasing system ATP-binding protein LolD (227 aa).

Positions isoleucine 8 to threonine 226 constitute an ABC transporter domain. Residue glycine 44–threonine 51 participates in ATP binding.

It belongs to the ABC transporter superfamily. Lipoprotein translocase (TC 3.A.1.125) family. As to quaternary structure, the complex is composed of two ATP-binding proteins (LolD) and two transmembrane proteins (LolC and LolE).

It localises to the cell inner membrane. In terms of biological role, part of the ABC transporter complex LolCDE involved in the translocation of mature outer membrane-directed lipoproteins, from the inner membrane to the periplasmic chaperone, LolA. Responsible for the formation of the LolA-lipoprotein complex in an ATP-dependent manner. This Syntrophotalea carbinolica (strain DSM 2380 / NBRC 103641 / GraBd1) (Pelobacter carbinolicus) protein is Lipoprotein-releasing system ATP-binding protein LolD.